Consider the following 398-residue polypeptide: Transcription factor kk1f (398 aa).

The segment at 1–28 is disordered; it reads MTFVETVAVPDNEERPSAGHNRPVADST. The region spanning 31 to 62 is the bZIP domain; the sequence is PNAREMKVQNRVAQRTHHRRLKTKLEVLRERL. The segment at 34–50 is basic motif; that stretch reads REMKVQNRVAQRTHHRR. Positions 51–58 are leucine-zipper; the sequence is LKTKLEVL.

This sequence belongs to the bZIP family.

The protein localises to the nucleus. Its pathway is secondary metabolite biosynthesis. Functionally, transcription factor; part of the gene cluster that mediates the biosynthesis of KK-1, a novel cyclic depsipeptide with 10 residues which is a promising active compound with high activity against many plant pathogens, especially Botrytis cinerea. Positively regulates the expression of all the genes from the KK-1 biosynthesis gene cluster. This is Transcription factor kk1f from Curvularia clavata.